A 194-amino-acid chain; its full sequence is Imidazoleglycerol-phosphate dehydratase (194 aa).

This sequence belongs to the imidazoleglycerol-phosphate dehydratase family.

It is found in the cytoplasm. It carries out the reaction D-erythro-1-(imidazol-4-yl)glycerol 3-phosphate = 3-(imidazol-4-yl)-2-oxopropyl phosphate + H2O. Its pathway is amino-acid biosynthesis; L-histidine biosynthesis; L-histidine from 5-phospho-alpha-D-ribose 1-diphosphate: step 6/9. This chain is Imidazoleglycerol-phosphate dehydratase, found in Sulfurisphaera tokodaii (strain DSM 16993 / JCM 10545 / NBRC 100140 / 7) (Sulfolobus tokodaii).